The primary structure comprises 103 residues: Nucleoid-associated protein BH0035 (103 aa).

The segment covering 1 to 20 (MKNMGQMMKQMQKMQKQMMK) has biased composition (low complexity). Residues 1 to 29 (MKNMGQMMKQMQKMQKQMMKAQEELKEKT) form a disordered region.

It belongs to the YbaB/EbfC family. In terms of assembly, homodimer.

The protein localises to the cytoplasm. Its subcellular location is the nucleoid. In terms of biological role, binds to DNA and alters its conformation. May be involved in regulation of gene expression, nucleoid organization and DNA protection. This is Nucleoid-associated protein BH0035 from Halalkalibacterium halodurans (strain ATCC BAA-125 / DSM 18197 / FERM 7344 / JCM 9153 / C-125) (Bacillus halodurans).